We begin with the raw amino-acid sequence, 116 residues long: Putative pterin-4-alpha-carbinolamine dehydratase (116 aa).

It belongs to the pterin-4-alpha-carbinolamine dehydratase family.

The catalysed reaction is (4aS,6R)-4a-hydroxy-L-erythro-5,6,7,8-tetrahydrobiopterin = (6R)-L-erythro-6,7-dihydrobiopterin + H2O. This Xylella fastidiosa (strain 9a5c) protein is Putative pterin-4-alpha-carbinolamine dehydratase.